The primary structure comprises 424 residues: UDP-N-acetylglucosamine 1-carboxyvinyltransferase (424 aa).

22-23 (KN) lines the phosphoenolpyruvate pocket. Arg-93 is a UDP-N-acetyl-alpha-D-glucosamine binding site. Cys-117 (proton donor) is an active-site residue. Cys-117 is subject to 2-(S-cysteinyl)pyruvic acid O-phosphothioketal. UDP-N-acetyl-alpha-D-glucosamine is bound by residues 122-126 (RPVDL), Asp-307, and Ile-329.

Belongs to the EPSP synthase family. MurA subfamily.

Its subcellular location is the cytoplasm. It catalyses the reaction phosphoenolpyruvate + UDP-N-acetyl-alpha-D-glucosamine = UDP-N-acetyl-3-O-(1-carboxyvinyl)-alpha-D-glucosamine + phosphate. It participates in cell wall biogenesis; peptidoglycan biosynthesis. In terms of biological role, cell wall formation. Adds enolpyruvyl to UDP-N-acetylglucosamine. The chain is UDP-N-acetylglucosamine 1-carboxyvinyltransferase from Chlorobaculum parvum (strain DSM 263 / NCIMB 8327) (Chlorobium vibrioforme subsp. thiosulfatophilum).